Here is a 144-residue protein sequence, read N- to C-terminus: MKKWLETLPPEWKKFRYRGYTLEELLAMPMDQFIKLLPARQRRSLLRGLTDAQRRLLWKIRKARQKMLQGKKVVVKTHVRDMIILPEMVGLTIAVYNGKEFIPVKITPEMIGHYLGEFSPTCKQVQHGEPGLKATRSTLHVALK.

This sequence belongs to the universal ribosomal protein uS19 family.

Protein S19 forms a complex with S13 that binds strongly to the 16S ribosomal RNA. The sequence is that of Small ribosomal subunit protein uS19 from Hyperthermus butylicus (strain DSM 5456 / JCM 9403 / PLM1-5).